The chain runs to 1013 residues: MPAKGRIIRVTGPLVIADGMKGAKMYEVVRVGELGLIGEIIRLEGDKAVIQVYEETAGLKPGEPVEGTGSSLSVELGPGLLTSIYDGIQRPLEVLREKSGHFIARGISAPALPRDKKWHFTPKVKVGDKVVGGDIIGEVPETSIIVHKIMVPPGIEGEIVEIADEGEYTIEEVIAKVKTPSGEIKELKMYQRWPVRVKRPYKEKLPPEVPLVTGQRVIDTFFPQAKGGTAAIPGPFGSGKCVDGDTLILTKEFGLIKIKDLYEKLDGKGRKTVEGNEEWTELEEPITVYGYKNGKIVEIKATHVYKGASSGMIEIKTRTGRKIKVTPIHKLFTGRVTKDGLVLEEVMAMHIKPGDRIAVVKKIDGGEYVKLDTSSVTKIKVPEVLNEELAEFLGYVIGDGTLKPRTVAIYNNDESLLKRANFLAMKLFGVSGKIVQERTVKALLIHSKYLVDFLKKLGIPGNKKARTWKVPKELLLSPPSVVKAFINAYIACDGYYNKEKGEIEIVTASEEGAYGLTYLLAKLGIYATIRRKTINGREYYRVVISGKANLEKLGVKREARGYTSIDVVPVDVESIYEALGRPYSELKKEGIEIHNYLSGENMSYETFRKFAKVVGLEEIAENHLQHILFDEVVEVNYISEPQEVYDITTETHNFVGGNMPTLLHNTVTQHQLAKWSDAQVVVYIGCGERGNEMTDVLEEFPKLKDPNTGKPLMERTVLIANTSNMPVAAREASIYTGITIAEYFRDMGYDVALMADSTSRWAEALREISGRLEEMPGEEGYPAYLASRLAEFYERAGRVVTLGSDYRVGSVSVIGAVSPPGGDFSEPVVQNTLRVVKVFWALDADLARRRHFPAINWLTSYSLYVDAVQDWWHKNVDPEWRRMRDKAMELLQKEAELQEIVRIVGPDALPERERAILLVARMLREDYLQQDAFDEVDTYCPPQKQVTMMRVLMTFYERTMDAISRGVPLEEIAKLPVREEIGRMKFEPDIEKIRALIDKTNEQFDELLKKYGA.

The region spanning 392–525 (FLGYVIGDGT…LTYLLAKLGI (134 aa)) is the DOD-type homing endonuclease domain.

The protein belongs to the ATPase alpha/beta chains family. As to quaternary structure, has multiple subunits with at least A(3), B(3), C, D, E, F, H, I and proteolipid K(x). This protein undergoes a protein self splicing that involves a post-translational excision of the VDE intervening region (intein) followed by peptide ligation.

It is found in the cell membrane. The enzyme catalyses ATP + H2O + 4 H(+)(in) = ADP + phosphate + 5 H(+)(out). In terms of biological role, component of the A-type ATP synthase that produces ATP from ADP in the presence of a proton gradient across the membrane. The A chain is the catalytic subunit. This chain is A-type ATP synthase subunit A, found in Pyrococcus furiosus (strain ATCC 43587 / DSM 3638 / JCM 8422 / Vc1).